The sequence spans 438 residues: 5-methylthioadenosine/S-adenosylhomocysteine deaminase (438 aa).

Residues H66 and H68 each contribute to the Zn(2+) site. E95, R148, and H188 together coordinate substrate. H215 is a Zn(2+) binding site. The substrate site is built by E218 and D305. D305 contributes to the Zn(2+) binding site.

This sequence belongs to the metallo-dependent hydrolases superfamily. MTA/SAH deaminase family. Zn(2+) is required as a cofactor.

The catalysed reaction is S-adenosyl-L-homocysteine + H2O + H(+) = S-inosyl-L-homocysteine + NH4(+). It catalyses the reaction S-methyl-5'-thioadenosine + H2O + H(+) = S-methyl-5'-thioinosine + NH4(+). In terms of biological role, catalyzes the deamination of 5-methylthioadenosine and S-adenosyl-L-homocysteine into 5-methylthioinosine and S-inosyl-L-homocysteine, respectively. Is also able to deaminate adenosine. This Halalkalibacterium halodurans (strain ATCC BAA-125 / DSM 18197 / FERM 7344 / JCM 9153 / C-125) (Bacillus halodurans) protein is 5-methylthioadenosine/S-adenosylhomocysteine deaminase.